Reading from the N-terminus, the 88-residue chain is Large ribosomal subunit protein bL31B (88 aa).

Belongs to the bacterial ribosomal protein bL31 family. Type B subfamily. Part of the 50S ribosomal subunit.

This Glaesserella parasuis serovar 5 (strain SH0165) (Haemophilus parasuis) protein is Large ribosomal subunit protein bL31B.